Here is a 321-residue protein sequence, read N- to C-terminus: Fe-S cluster assembly protein DRE2 (321 aa).

The tract at residues 1–161 (MPAPVPPTAF…STPVTLSGAR (161 aa)) is N-terminal SAM-like domain. The tract at residues 123–168 (PSPSTLAYTSPSAPSLPTVASDPSPAPSSSTPVTLSGARPLQLRRN) is disordered. Residues 139-156 (PTVASDPSPAPSSSTPVT) show a composition bias toward low complexity. Residues 162–197 (PLQLRRNGDKARKAALWAIDSPLIPDGGKSLLTPAD) form a linker region. Residues Cys-203, Cys-219, Cys-222, and Cys-224 each coordinate [2Fe-2S] cluster. The fe-S binding site A stretch occupies residues 203–224 (CVFPAENGKPVKRRRACKDCTC). [4Fe-4S] cluster-binding residues include Cys-285, Cys-288, Cys-296, and Cys-299. 2 short sequence motifs (cx2C motif) span residues 285 to 288 (CGSC) and 296 to 299 (CSSC). The interval 285–299 (CGSCYLGDAFRCSSC) is fe-S binding site B.

It belongs to the anamorsin family. As to quaternary structure, monomer. Interacts with TAH18. Interacts with MIA40. [2Fe-2S] cluster serves as cofactor. It depends on [4Fe-4S] cluster as a cofactor.

The protein localises to the cytoplasm. It localises to the mitochondrion intermembrane space. Functionally, component of the cytosolic iron-sulfur (Fe-S) protein assembly (CIA) machinery required for the maturation of extramitochondrial Fe-S proteins. Part of an electron transfer chain functioning in an early step of cytosolic Fe-S biogenesis, facilitating the de novo assembly of a [4Fe-4S] cluster on the scaffold complex CFD1-NBP35. Electrons are transferred to DRE2 from NADPH via the FAD- and FMN-containing protein TAH18. TAH18-DRE2 are also required for the assembly of the diferric tyrosyl radical cofactor of ribonucleotide reductase (RNR), probably by providing electrons for reduction during radical cofactor maturation in the catalytic small subunit RNR2. The protein is Fe-S cluster assembly protein DRE2 of Cryptococcus neoformans var. neoformans serotype D (strain B-3501A) (Filobasidiella neoformans).